Here is a 106-residue protein sequence, read N- to C-terminus: MAEEVPEFKITIFTDKGRSTISGTEYPLPILPYPAPYTFRLSGYTIEGPILTNKEFKVITGKIEYGGEEFDIPPSSKGSWRRADNLMNLIFVTIYLSRQPKKVFHY.

It belongs to the csb family.

This is an uncharacterized protein from Dictyostelium discoideum (Social amoeba).